The following is a 673-amino-acid chain: Flotillin family inner membrane protein sll1021 (673 aa).

Residues 60 to 80 (LLFFPVVIIAVIFLILVTIFL) form a helical membrane-spanning segment. Residues 639 to 673 (LQDPPSVSPPSAAVSEDDWPDLAPPTETNFSPEEI) are disordered. The segment covering 664-673 (TETNFSPEEI) has biased composition (polar residues).

The protein belongs to the band 7/mec-2 family. Flotillin subfamily. Homooligomerizes.

Its subcellular location is the cell inner membrane. It is found in the membrane raft. Functionally, found in functional membrane microdomains (FMM) that may be equivalent to eukaryotic membrane rafts. FMMs are highly dynamic and increase in number as cells age. Flotillins are thought to be important factors in membrane fluidity. This chain is Flotillin family inner membrane protein sll1021, found in Synechocystis sp. (strain ATCC 27184 / PCC 6803 / Kazusa).